The following is a 733-amino-acid chain: Phosphoribosylformylglycinamidine synthase subunit PurL (733 aa).

His41 is an active-site residue. The ATP site is built by Tyr44 and Lys83. Position 85 (Glu85) interacts with Mg(2+). Residues 86–89 (SHNH) and Arg108 each bind substrate. The active-site Proton acceptor is the His87. Asp109 lines the Mg(2+) pocket. A disordered region spans residues 212-232 (GASFASQELSEESEEKRPSVQ). Gln232 is a substrate binding site. Position 260 (Asp260) interacts with Mg(2+). 304–306 (ESQ) is a binding site for substrate. ATP contacts are provided by Asp488 and Gly525. Residue Asn526 participates in Mg(2+) binding. Position 528 (Ser528) interacts with substrate.

It belongs to the FGAMS family. In terms of assembly, monomer. Part of the FGAM synthase complex composed of 1 PurL, 1 PurQ and 2 PurS subunits.

It is found in the cytoplasm. It carries out the reaction N(2)-formyl-N(1)-(5-phospho-beta-D-ribosyl)glycinamide + L-glutamine + ATP + H2O = 2-formamido-N(1)-(5-O-phospho-beta-D-ribosyl)acetamidine + L-glutamate + ADP + phosphate + H(+). The protein operates within purine metabolism; IMP biosynthesis via de novo pathway; 5-amino-1-(5-phospho-D-ribosyl)imidazole from N(2)-formyl-N(1)-(5-phospho-D-ribosyl)glycinamide: step 1/2. Its function is as follows. Part of the phosphoribosylformylglycinamidine synthase complex involved in the purines biosynthetic pathway. Catalyzes the ATP-dependent conversion of formylglycinamide ribonucleotide (FGAR) and glutamine to yield formylglycinamidine ribonucleotide (FGAM) and glutamate. The FGAM synthase complex is composed of three subunits. PurQ produces an ammonia molecule by converting glutamine to glutamate. PurL transfers the ammonia molecule to FGAR to form FGAM in an ATP-dependent manner. PurS interacts with PurQ and PurL and is thought to assist in the transfer of the ammonia molecule from PurQ to PurL. The chain is Phosphoribosylformylglycinamidine synthase subunit PurL from Caldanaerobacter subterraneus subsp. tengcongensis (strain DSM 15242 / JCM 11007 / NBRC 100824 / MB4) (Thermoanaerobacter tengcongensis).